The sequence spans 429 residues: Growth/differentiation factor 2 (429 aa).

A signal peptide spans 1-22; that stretch reads MCPGALWVALPLLSLLAGSLQG. Positions 23-319 are excised as a propeptide; sequence KPLQSWGRGS…AGSTLARRKR (297 aa). Residues Asn71 and Asn136 are each glycosylated (N-linked (GlcNAc...) asparagine). Residues 283–301 are compositionally biased toward basic and acidic residues; the sequence is VLKKLSKDGSTEAGESSHE. Residues 283–308 form a disordered region; that stretch reads VLKKLSKDGSTEAGESSHEEDTDGHV. 3 disulfides stabilise this stretch: Cys327–Cys393, Cys356–Cys426, and Cys360–Cys428. Residues 402-416 are interaction with ENG; the sequence is SVLYKDDMGVPTLKY.

The protein belongs to the TGF-beta family. In terms of assembly, homodimer; disulfide-linked. Detected in extracellular fluid as mature homodimer, and in complex with its propeptide. Interacts with ACVRL1, BMPR2 and ACVR2B with high affinity (in vitro). Identified in a complex with ACVRL1 and ACVR2B. Has ten times lower affinity for ACVR2A (in vitro). Interacts with ENG, forming a heterotetramer with a 2:2 stoichiometry. Can form a heteromeric complex with ENG and ACVRL1. Interacts with type I receptor ACVR1. A reversible disulfide bond can be formed between the two subunits in the homodimer; this has no effect on GDF2 activity. As to expression, detected in blood plasma (at protein level).

It localises to the secreted. Potent circulating inhibitor of angiogenesis. Signals through the type I activin receptor ACVRL1 but not other Alks. Signaling through SMAD1 in endothelial cells requires TGF-beta coreceptor endoglin/ENG. In Homo sapiens (Human), this protein is Growth/differentiation factor 2 (GDF2).